The following is a 348-amino-acid chain: MNESSTNIPLACITAYELSFHPVYRNFQIYQLIMLFSSLFPLTYFILFQLLKSSFHGNLKSLLVGYFGAILVFSVVFLVEAFIQVLLPFISEQKCDLLIQPKYYKLGNLLGCLLMTIPTFFPISITFERLIATKMADDYEKTRVFLGPILAIFLVLLDLFLILLIYKEAIVTGGSISFVFIPASIASKMYMFFIMMLILNSFNFFFSFLLLRRNAQLKKSNSTLAAKFQLEEVYSSTKFSISVIFVHVTFFGSYTTITILLRYFGSYFFSDPIDLGAVRGAFMTMISSYNFAVGVASVYFNYIYRIKKIIEIKGNIRIVATGQAGAINYDKAIFNIWNSTSSTNNTSY.

The next 7 helical transmembrane spans lie at 31–51, 63–83, 107–127, 145–165, 191–211, 241–261, and 280–300; these read QLIMLFSSLFPLTYFILFQLL, LVGYFGAILVFSVVFLVEAFI, GNLLGCLLMTIPTFFPISITF, FLGPILAIFLVLLDLFLILLI, MFFIMMLILNSFNFFFSFLLL, ISVIFVHVTFFGSYTTITILL, and GAFMTMISSYNFAVGVASVYF.

It belongs to the nematode receptor-like protein srb family.

The protein resides in the membrane. This Caenorhabditis elegans protein is Serpentine receptor class beta-7 (srb-7).